A 68-amino-acid polypeptide reads, in one-letter code: Small ribosomal subunit protein eS17 (68 aa).

It belongs to the eukaryotic ribosomal protein eS17 family.

The protein is Small ribosomal subunit protein eS17 of Staphylothermus marinus (strain ATCC 43588 / DSM 3639 / JCM 9404 / F1).